The sequence spans 265 residues: Homeobox protein Nkx-6.3 (265 aa).

The segment at residues lysine 139–serine 198 is a DNA-binding region (homeobox). The tract at residues lysine 196–aspartate 240 is disordered.

The protein localises to the nucleus. Functionally, putative transcription factor, which may be involved in patterning of central nervous system and pancreas. In Homo sapiens (Human), this protein is Homeobox protein Nkx-6.3 (NKX6-3).